The sequence spans 302 residues: Lysosomal thioesterase PPT2 (302 aa).

An N-terminal signal peptide occupies residues 1-27 (MLGLCGQRLPAAWVLLLLPFLPLLLLA). Asparagine 60 is a glycosylation site (N-linked (GlcNAc...) asparagine). Cystine bridges form between cysteine 109-cysteine 117 and cysteine 165-cysteine 176. Residue serine 111 is the Nucleophile of the active site. Residues asparagine 190 and asparagine 206 are each glycosylated (N-linked (GlcNAc...) asparagine). The active site involves aspartate 228. A glycan (N-linked (GlcNAc...) asparagine) is linked at asparagine 245. Cysteine 276 and cysteine 296 are joined by a disulfide. Histidine 283 is a catalytic residue. N-linked (GlcNAc...) asparagine glycosylation is present at asparagine 289.

The protein belongs to the palmitoyl-protein thioesterase family. As to expression, broadly expressed, with highest levels in skeletal muscle.

It is found in the lysosome. The enzyme catalyses hexadecanoyl-CoA + H2O = hexadecanoate + CoA + H(+). It catalyses the reaction S-hexadecanoyl-N-acetylcysteamine + H2O = N-acetylcysteamine + hexadecanoate + H(+). In terms of biological role, catalyzes the cleavage of thioester bonds from S-palmitoyl-CoA or S-palmitoyl-N-acetylcysteamine (unbranched structures) but does not have activity against palmitoylcysteine or palmitoylated proteins, branched structures or bulky head groups. Conversely, hydrolyzes both long and short chain fatty acyl-CoA substrate. Functionally, catalytically inactive due to lack of active site His-283. In Homo sapiens (Human), this protein is Lysosomal thioesterase PPT2.